Consider the following 311-residue polypeptide: 3-oxo-4,17-pregnadiene-20-carboxyl-CoA hydratase alpha subunit (311 aa).

The tract at residues 198–295 (WDGVKAHELR…VAIGMPVRAT (98 aa)) is DUF35.

The protein belongs to the thioester dehydratase family. In terms of assembly, heterodimer composed of ChsH1 and ChsH2. Two heterodimers combine to form a heterotetramer. The complex interacts with Ltp2 via the DUF35 C-terminal region of ChsH2. The ChsH1-ChsH2-Ltp2 protein complex is composed of two protomers that form a heterohexameric structure through the Ltp2 dimerization interface.

It carries out the reaction 3-oxochola-4,17-dien-22-oyl-CoA + H2O = 17-hydroxy-3-oxochol-4-en-22-oyl-CoA. It catalyses the reaction (2E)-octenoyl-CoA + H2O = 3-hydroxyoctanoyl-CoA. The enzyme catalyses (2E)-decenoyl-CoA + H2O = 3-hydroxydecanoyl-CoA. It participates in steroid metabolism; cholesterol degradation. With respect to regulation, in the absence of the Ltp2 aldolase, ChsH1/ChsH2 can hydrate only about 30% of the 3-OPDC-CoA substrate. Complete turnover requires the presence of Ltp2. In terms of biological role, involved in cholesterol side chain degradation. Catalyzes the hydration of 3-oxo-4,17-pregnadiene-20-carboxyl-CoA (3-OPDC-CoA) to form 17-hydroxy-3-oxo-4-pregnene-20-carboxyl-CoA (17-HOPC-CoA), in the modified beta-oxidation pathway for cholesterol side chain degradation. Can also use octenoyl-CoA and decenoyl-CoA, with lower efficiency. The polypeptide is 3-oxo-4,17-pregnadiene-20-carboxyl-CoA hydratase alpha subunit (Mycobacterium tuberculosis (strain ATCC 25618 / H37Rv)).